A 205-amino-acid chain; its full sequence is Fe/S biogenesis protein NfuA (205 aa).

Positions 162 and 165 each coordinate [4Fe-4S] cluster.

It belongs to the NfuA family. Homodimer. The cofactor is [4Fe-4S] cluster.

Its function is as follows. Involved in iron-sulfur cluster biogenesis. Binds a 4Fe-4S cluster, can transfer this cluster to apoproteins, and thereby intervenes in the maturation of Fe/S proteins. Could also act as a scaffold/chaperone for damaged Fe/S proteins. This is Fe/S biogenesis protein NfuA from Blochmanniella floridana.